Consider the following 315-residue polypeptide: Thioredoxin reductase (315 aa).

FAD is bound at residue 34 to 41; it reads EGMKVGGQ. A disulfide bridge links Cys134 with Cys137. FAD is bound at residue 282–291; the sequence is DIRVKSLRQV.

It belongs to the class-II pyridine nucleotide-disulfide oxidoreductase family. In terms of assembly, homodimer. Requires FAD as cofactor.

Its subcellular location is the cytoplasm. It catalyses the reaction [thioredoxin]-dithiol + NADP(+) = [thioredoxin]-disulfide + NADPH + H(+). This Peptoclostridium litorale (Clostridium litorale) protein is Thioredoxin reductase (trxB).